The following is a 396-amino-acid chain: 1-deoxy-D-xylulose 5-phosphate reductoisomerase (396 aa).

NADPH is bound by residues Thr10, Gly11, Ser12, Ile13, and Asn123. 1-deoxy-D-xylulose 5-phosphate is bound at residue Lys124. Glu125 is an NADPH binding site. A Mn(2+)-binding site is contributed by Asp149. 1-deoxy-D-xylulose 5-phosphate contacts are provided by Ser150, Glu151, Ser185, and His208. Glu151 is a binding site for Mn(2+). Gly214 is a binding site for NADPH. 4 residues coordinate 1-deoxy-D-xylulose 5-phosphate: Ser221, Asn226, Lys227, and Glu230. Glu230 contacts Mn(2+).

The protein belongs to the DXR family. Mg(2+) is required as a cofactor. Requires Mn(2+) as cofactor.

The enzyme catalyses 2-C-methyl-D-erythritol 4-phosphate + NADP(+) = 1-deoxy-D-xylulose 5-phosphate + NADPH + H(+). Its pathway is isoprenoid biosynthesis; isopentenyl diphosphate biosynthesis via DXP pathway; isopentenyl diphosphate from 1-deoxy-D-xylulose 5-phosphate: step 1/6. Catalyzes the NADPH-dependent rearrangement and reduction of 1-deoxy-D-xylulose-5-phosphate (DXP) to 2-C-methyl-D-erythritol 4-phosphate (MEP). The polypeptide is 1-deoxy-D-xylulose 5-phosphate reductoisomerase (Shewanella frigidimarina (strain NCIMB 400)).